Reading from the N-terminus, the 180-residue chain is NADH-quinone oxidoreductase subunit I (180 aa).

2 consecutive 4Fe-4S ferredoxin-type domains span residues 50–80 (LTRDPDGEERCVACNLCAVACPVGCISLQKA) and 90–119 (EFFRINFSRCIFCGMCEEACPTTAIQLTPD). 8 residues coordinate [4Fe-4S] cluster: cysteine 60, cysteine 63, cysteine 66, cysteine 70, cysteine 99, cysteine 102, cysteine 105, and cysteine 109.

Belongs to the complex I 23 kDa subunit family. NDH-1 is composed of 14 different subunits. Subunits NuoA, H, J, K, L, M, N constitute the membrane sector of the complex. The cofactor is [4Fe-4S] cluster.

It is found in the cell inner membrane. It carries out the reaction a quinone + NADH + 5 H(+)(in) = a quinol + NAD(+) + 4 H(+)(out). In terms of biological role, NDH-1 shuttles electrons from NADH, via FMN and iron-sulfur (Fe-S) centers, to quinones in the respiratory chain. The immediate electron acceptor for the enzyme in this species is believed to be ubiquinone. Couples the redox reaction to proton translocation (for every two electrons transferred, four hydrogen ions are translocated across the cytoplasmic membrane), and thus conserves the redox energy in a proton gradient. The polypeptide is NADH-quinone oxidoreductase subunit I (Acinetobacter baumannii (strain ACICU)).